Reading from the N-terminus, the 367-residue chain is Histidinol-phosphate aminotransferase (367 aa).

An N6-(pyridoxal phosphate)lysine modification is found at Lys-225.

This sequence belongs to the class-II pyridoxal-phosphate-dependent aminotransferase family. Histidinol-phosphate aminotransferase subfamily. As to quaternary structure, homodimer. It depends on pyridoxal 5'-phosphate as a cofactor.

It catalyses the reaction L-histidinol phosphate + 2-oxoglutarate = 3-(imidazol-4-yl)-2-oxopropyl phosphate + L-glutamate. The protein operates within amino-acid biosynthesis; L-histidine biosynthesis; L-histidine from 5-phospho-alpha-D-ribose 1-diphosphate: step 7/9. The sequence is that of Histidinol-phosphate aminotransferase from Hyphomonas neptunium (strain ATCC 15444).